Here is a 291-residue protein sequence, read N- to C-terminus: 4-diphosphocytidyl-2-C-methyl-D-erythritol kinase (291 aa).

Lys10 is a catalytic residue. 94–104 (PVSAGLAGGSS) contacts ATP. The active site involves Asp136.

It belongs to the GHMP kinase family. IspE subfamily.

It catalyses the reaction 4-CDP-2-C-methyl-D-erythritol + ATP = 4-CDP-2-C-methyl-D-erythritol 2-phosphate + ADP + H(+). It functions in the pathway isoprenoid biosynthesis; isopentenyl diphosphate biosynthesis via DXP pathway; isopentenyl diphosphate from 1-deoxy-D-xylulose 5-phosphate: step 3/6. Catalyzes the phosphorylation of the position 2 hydroxy group of 4-diphosphocytidyl-2C-methyl-D-erythritol. The chain is 4-diphosphocytidyl-2-C-methyl-D-erythritol kinase from Listeria monocytogenes serotype 4a (strain HCC23).